Consider the following 442-residue polypeptide: Lipoyl synthase, apicoplast (442 aa).

Positions 1–25 (MHVLTPSLYIYAFFIVCVRLKCGRS) are cleaved as a signal peptide. A disordered region spans residues 92-154 (LLRSESATDE…EKKPDWFHVP (63 aa)). Residues 109–127 (LKEKLKESPANWGKDKQEE) show a composition bias toward basic and acidic residues. 7 residues coordinate [4Fe-4S] cluster: C177, C182, C188, C203, C207, C210, and S418. In terms of domain architecture, Radical SAM core spans 189 to 407 (WNIGTATIML…KEEGMKMGFK (219 aa)).

Belongs to the radical SAM superfamily. Lipoyl synthase family. The cofactor is [4Fe-4S] cluster.

The protein resides in the plastid. It localises to the apicoplast. It catalyses the reaction [[Fe-S] cluster scaffold protein carrying a second [4Fe-4S](2+) cluster] + N(6)-octanoyl-L-lysyl-[protein] + 2 oxidized [2Fe-2S]-[ferredoxin] + 2 S-adenosyl-L-methionine + 4 H(+) = [[Fe-S] cluster scaffold protein] + N(6)-[(R)-dihydrolipoyl]-L-lysyl-[protein] + 4 Fe(3+) + 2 hydrogen sulfide + 2 5'-deoxyadenosine + 2 L-methionine + 2 reduced [2Fe-2S]-[ferredoxin]. Its pathway is protein modification; protein lipoylation via endogenous pathway; protein N(6)-(lipoyl)lysine from octanoyl-[acyl-carrier-protein]: step 2/2. Catalyzes the radical-mediated insertion of two sulfur atoms into the C-6 and C-8 positions of the octanoyl moiety bound to the lipoyl domains of lipoate-dependent enzymes, thereby converting the octanoylated domains into lipoylated derivatives. The sequence is that of Lipoyl synthase, apicoplast from Plasmodium vivax (strain Salvador I).